The sequence spans 359 residues: Histidinol-phosphate aminotransferase (359 aa).

Lysine 217 is subject to N6-(pyridoxal phosphate)lysine.

This sequence belongs to the class-II pyridoxal-phosphate-dependent aminotransferase family. Histidinol-phosphate aminotransferase subfamily. As to quaternary structure, homodimer. It depends on pyridoxal 5'-phosphate as a cofactor.

The enzyme catalyses L-histidinol phosphate + 2-oxoglutarate = 3-(imidazol-4-yl)-2-oxopropyl phosphate + L-glutamate. It functions in the pathway amino-acid biosynthesis; L-histidine biosynthesis; L-histidine from 5-phospho-alpha-D-ribose 1-diphosphate: step 7/9. The sequence is that of Histidinol-phosphate aminotransferase from Citrobacter koseri (strain ATCC BAA-895 / CDC 4225-83 / SGSC4696).